A 61-amino-acid chain; its full sequence is Beta-insect depressant toxin BmKIT2 (61 aa).

The LCN-type CS-alpha/beta domain maps to 1–61 (DGYIKGKSGC…TWKSESNTCG (61 aa)). Intrachain disulfides connect Cys10-Cys60, Cys14-Cys35, Cys21-Cys42, and Cys25-Cys44. A Glycine amide modification is found at Gly61.

This sequence belongs to the long (4 C-C) scorpion toxin superfamily. Sodium channel inhibitor family. Beta subfamily. Expressed by the venom gland.

It localises to the secreted. On insects, this depressant beta-toxins cause a transient contraction paralysis followed by a slow flaccid paralysis. They bind voltage-independently at site-4 of sodium channels (Nav) and shift the voltage of activation toward more negative potentials thereby affecting sodium channel activation and promoting spontaneous and repetitive firing. This toxin is active against insects and mammals. It is capable of binding to not only cockroach neuronal membranes, but also rat cerebrocortical and hippocampal synaptosomes. This toxin also has potent peripheral and central suppressive effects on rat nociceptive spontaneous responses, thermal hyperalgesia and spinal c-Fos expression induced by formalin and carrageenan, which may be derived from its modulation on the activity of sodium channels of the neurons. Administration of BmKIT2 into rat brain can also suppress the epileptic seizures significantly. The sequence is that of Beta-insect depressant toxin BmKIT2 from Olivierus martensii (Manchurian scorpion).